The chain runs to 217 residues: Orotidine 5'-phosphate decarboxylase (217 aa).

Residues Asp-14, Lys-36, 64 to 73 (DFKVADIPST), Ser-120, 172 to 182 (PGVGAQGGNLS), Gly-197, and Arg-198 each bind substrate. Catalysis depends on Lys-66, which acts as the Proton donor.

The protein belongs to the OMP decarboxylase family. Type 1 subfamily. As to quaternary structure, homodimer.

It catalyses the reaction orotidine 5'-phosphate + H(+) = UMP + CO2. It participates in pyrimidine metabolism; UMP biosynthesis via de novo pathway; UMP from orotate: step 2/2. Functionally, catalyzes the decarboxylation of orotidine 5'-monophosphate (OMP) to uridine 5'-monophosphate (UMP). This chain is Orotidine 5'-phosphate decarboxylase, found in Methanococcus maripaludis (strain DSM 14266 / JCM 13030 / NBRC 101832 / S2 / LL).